Consider the following 347-residue polypeptide: MRIEEDLKLGFKDVLFRPKRSTLKSRSQLSLTRQFTFKHTQTQWQGVPVIAANMDTVGSFAMARTLAGFEMMTAVHKHYSLEQWQAFVNSTDPTLLGHVMVSTGTSEDDFTKTRQILAMSTALRFICVDVANGYSQHFVEFLRKIREACPNHVILAGNVVTGEMVEELILSGADIVKVGIGPGSVCTTRVKTGVGYPQLSAIIECADAAHGLGGQIVGDGGCTCPGDVAKAFGGGADFVMLGGMLAAHEECGGEVVDVDGTPFMKFYGMSSSSAMDKHAGGVADYRASEGKTVLLPYRGPVENTVRDILGGVRSTCTYVGASQLKELTKRTTFIRVREQENNVYGKE.

Residue 108–131 (DDFTKTRQILAMSTALRFICVDVA) coordinates NADP(+). G181 and G183 together coordinate K(+). C186 (thioimidate intermediate) is an active-site residue. 216-239 (IVGDGGCTCPGDVAKAFGGGADFV) contacts NADP(+).

This sequence belongs to the IMPDH/GMPR family. GuaC type 1 subfamily. As to quaternary structure, homotetramer.

It catalyses the reaction IMP + NH4(+) + NADP(+) = GMP + NADPH + 2 H(+). Catalyzes the irreversible NADPH-dependent deamination of GMP to IMP. It functions in the conversion of nucleobase, nucleoside and nucleotide derivatives of G to A nucleotides, and in maintaining the intracellular balance of A and G nucleotides. This chain is GMP reductase, found in Aeromonas salmonicida (strain A449).